Consider the following 564-residue polypeptide: Proline--tRNA ligase 1 (564 aa).

Belongs to the class-II aminoacyl-tRNA synthetase family. ProS type 1 subfamily. As to quaternary structure, homodimer.

It localises to the cytoplasm. The catalysed reaction is tRNA(Pro) + L-proline + ATP = L-prolyl-tRNA(Pro) + AMP + diphosphate. Catalyzes the attachment of proline to tRNA(Pro) in a two-step reaction: proline is first activated by ATP to form Pro-AMP and then transferred to the acceptor end of tRNA(Pro). As ProRS can inadvertently accommodate and process non-cognate amino acids such as alanine and cysteine, to avoid such errors it has two additional distinct editing activities against alanine. One activity is designated as 'pretransfer' editing and involves the tRNA(Pro)-independent hydrolysis of activated Ala-AMP. The other activity is designated 'posttransfer' editing and involves deacylation of mischarged Ala-tRNA(Pro). The misacylated Cys-tRNA(Pro) is not edited by ProRS. The chain is Proline--tRNA ligase 1 from Streptomyces avermitilis (strain ATCC 31267 / DSM 46492 / JCM 5070 / NBRC 14893 / NCIMB 12804 / NRRL 8165 / MA-4680).